Here is a 1176-residue protein sequence, read N- to C-terminus: 3-hydroxy-3-methylglutaryl-coenzyme A reductase (1176 aa).

At 1 to 34 (MSLPNHSGSSAFKSFSYIVGTGIKRAAKLSTRNP) the chain is on the cytoplasmic side. The chain crosses the membrane as a helical span at residues 35-55 (IEMIVVVLILSSFSYFYLFNL). The Lumenal portion of the chain corresponds to 56-299 (ARTSDIFSGT…VKELIDLADN (244 aa)). 2 N-linked (GlcNAc...) asparagine glycosylation sites follow: Asn224 and Asn238. Residues 300-320 (IDIIVILVGYIMMIATFISLY) form a helical membrane-spanning segment. The SSD domain maps to 301–465 (DIIVILVGYI…FTWYTAVLAL (165 aa)). Topologically, residues 321 to 330 (VNMRAMGSRY) are cytoplasmic. Residues 331–351 (TLATAVVFNGFFSFMLALLTV) traverse the membrane as a helical segment. Residues 352-355 (RALG) lie on the Lumenal side of the membrane. A helical transmembrane segment spans residues 356–376 (VDVYPVVLAEAIPFLAVTIGF). Residues 377 to 422 (ERPFKLTKRVFQFSKETPLTKQEIRTTIMRAVDTVALPIARDCFME) are Cytoplasmic-facing. The chain crosses the membrane as a helical span at residues 423 to 443 (IIVLVLGAKSGISGLEEFCLL). Position 444 (Ser444) is a topological domain, lumenal. The chain crosses the membrane as a helical span at residues 445–465 (AILLAYDFIIMFTWYTAVLAL). The Cytoplasmic portion of the chain corresponds to 466 to 524 (KLELLRIREINGISADDIKKGTKKSTGYIRRTVIKAFSDDHAAGANTANQKADGPIIGR). The chain crosses the membrane as a helical span at residues 525-545 (VKLLMIVGFVVMHIFKFCSAF). At 546-622 (QSVGPQVNIT…DTYAVYIQHP (77 aa)) the chain is on the lumenal side. N-linked (GlcNAc...) asparagine glycosylation is found at Asn553 and Asn596. The chain crosses the membrane as a helical span at residues 623–643 (VISKWLTIALFVSLFLNTYLF). Over 644–1176 (NVAKQPKQIV…GTEPGTCIKS (533 aa)) the chain is Cytoplasmic. Positions 699-724 (PNHKRSHNHHHSHSHSHNHHSNHHQS) are disordered. Over residues 700-721 (NHKRSHNHHHSHSHSHNHHSNH) the composition is skewed to basic residues. Glu841 (charge relay system) is an active-site residue. 847–853 (STARGCK) serves as a coordination point for CoA. Residues 907–909 (SRF) and 934–942 (DAMGMNMIS) each bind NADP(+). Residue Lys972 is the Charge relay system of the active site. Residue 1001-1003 (VLK) participates in CoA binding. Asp1048 (charge relay system) is an active-site residue. 1145–1146 (AH) contacts CoA. His1146 functions as the Proton donor in the catalytic mechanism. 1150–1151 (NR) serves as a coordination point for NADP(+). The tract at residues 1153 to 1176 (TQAPTITSGPAPSTGTEPGTCIKS) is disordered.

Belongs to the HMG-CoA reductase family.

Its subcellular location is the endoplasmic reticulum membrane. The enzyme catalyses (R)-mevalonate + 2 NADP(+) + CoA = (3S)-3-hydroxy-3-methylglutaryl-CoA + 2 NADPH + 2 H(+). It participates in metabolic intermediate biosynthesis; (R)-mevalonate biosynthesis; (R)-mevalonate from acetyl-CoA: step 3/3. Functionally, HMG-CoA reductase; part of the first module of ergosterol biosynthesis pathway that includes the early steps of the pathway, conserved across all eukaryotes, and which results in the formation of mevalonate from acetyl-coenzyme A (acetyl-CoA). In this module, the cytosolic acetyl-CoA acetyltransferase catalyzes the formation of acetoacetyl-CoA. The hydroxymethylglutaryl-CoA synthase then condenses acetyl-CoA with acetoacetyl-CoA to form HMG-CoA. The rate-limiting step of the early module is the reduction to mevalonate by the 3-hydroxy-3-methylglutaryl-coenzyme A (HMG-CoA) reductase hmgA. The sequence is that of 3-hydroxy-3-methylglutaryl-coenzyme A reductase from Phycomyces blakesleeanus (strain ATCC 8743b / DSM 1359 / FGSC 10004 / NBRC 33097 / NRRL 1555).